The sequence spans 228 residues: LexA repressor (228 aa).

Residues 26 to 46 (FDEMKEALDLRSKSGIHRLIT) constitute a DNA-binding region (H-T-H motif). Catalysis depends on for autocatalytic cleavage activity residues S149 and K187.

The protein belongs to the peptidase S24 family. Homodimer.

The catalysed reaction is Hydrolysis of Ala-|-Gly bond in repressor LexA.. Functionally, represses a number of genes involved in the response to DNA damage (SOS response), including recA and lexA. In the presence of single-stranded DNA, RecA interacts with LexA causing an autocatalytic cleavage which disrupts the DNA-binding part of LexA, leading to derepression of the SOS regulon and eventually DNA repair. The polypeptide is LexA repressor (Jannaschia sp. (strain CCS1)).